The sequence spans 165 residues: Large ribosomal subunit protein uL10 (165 aa).

It belongs to the universal ribosomal protein uL10 family. Part of the ribosomal stalk of the 50S ribosomal subunit. The N-terminus interacts with L11 and the large rRNA to form the base of the stalk. The C-terminus forms an elongated spine to which L12 dimers bind in a sequential fashion forming a multimeric L10(L12)X complex.

In terms of biological role, forms part of the ribosomal stalk, playing a central role in the interaction of the ribosome with GTP-bound translation factors. This Borrelia turicatae (strain 91E135) protein is Large ribosomal subunit protein uL10.